The primary structure comprises 486 residues: Membrane-bound lytic murein transglycosylase F (486 aa).

A signal peptide spans 1–21; it reads MTRIKLSYFTIGLVALLLALA. Positions 22–268 are non-LT domain; the sequence is LWPNIPWRNG…RLEEKYLGHV (247 aa). The segment at 269–486 is LT domain; it reads GSFDYVDTKT…VVGPGWSIGD (218 aa). The active site involves glutamate 313.

In the N-terminal section; belongs to the bacterial solute-binding protein 3 family. It in the C-terminal section; belongs to the transglycosylase Slt family.

The protein localises to the cell outer membrane. It catalyses the reaction Exolytic cleavage of the (1-&gt;4)-beta-glycosidic linkage between N-acetylmuramic acid (MurNAc) and N-acetylglucosamine (GlcNAc) residues in peptidoglycan, from either the reducing or the non-reducing ends of the peptidoglycan chains, with concomitant formation of a 1,6-anhydrobond in the MurNAc residue.. In terms of biological role, murein-degrading enzyme that degrades murein glycan strands and insoluble, high-molecular weight murein sacculi, with the concomitant formation of a 1,6-anhydromuramoyl product. Lytic transglycosylases (LTs) play an integral role in the metabolism of the peptidoglycan (PG) sacculus. Their lytic action creates space within the PG sacculus to allow for its expansion as well as for the insertion of various structures such as secretion systems and flagella. The polypeptide is Membrane-bound lytic murein transglycosylase F (Yersinia pseudotuberculosis serotype I (strain IP32953)).